Consider the following 121-residue polypeptide: Large ribosomal subunit protein uL14 (121 aa).

The protein belongs to the universal ribosomal protein uL14 family. In terms of assembly, part of the 50S ribosomal subunit. Forms a cluster with proteins L3 and L19. In the 70S ribosome, L14 and L19 interact and together make contacts with the 16S rRNA in bridges B5 and B8.

Its function is as follows. Binds to 23S rRNA. Forms part of two intersubunit bridges in the 70S ribosome. This Porphyromonas gingivalis (strain ATCC 33277 / DSM 20709 / CIP 103683 / JCM 12257 / NCTC 11834 / 2561) protein is Large ribosomal subunit protein uL14.